Consider the following 233-residue polypeptide: Protein-L-isoaspartate O-methyltransferase (233 aa).

S83 is an active-site residue.

This sequence belongs to the methyltransferase superfamily. L-isoaspartyl/D-aspartyl protein methyltransferase family.

The protein localises to the cytoplasm. It carries out the reaction [protein]-L-isoaspartate + S-adenosyl-L-methionine = [protein]-L-isoaspartate alpha-methyl ester + S-adenosyl-L-homocysteine. Catalyzes the methyl esterification of L-isoaspartyl residues in peptides and proteins that result from spontaneous decomposition of normal L-aspartyl and L-asparaginyl residues. It plays a role in the repair and/or degradation of damaged proteins. The polypeptide is Protein-L-isoaspartate O-methyltransferase (Opitutus terrae (strain DSM 11246 / JCM 15787 / PB90-1)).